We begin with the raw amino-acid sequence, 296 residues long: Transposase for insertion sequence element IS629 (296 aa).

Residues 125 to 285 (VAERPDQLWV…TPPAEAEKAY (161 aa)) enclose the Integrase catalytic domain.

Functionally, involved in the transposition of the insertion sequence. The sequence is that of Transposase for insertion sequence element IS629 from Shigella sonnei.